A 148-amino-acid chain; its full sequence is F-box protein At3g55900 (148 aa).

The F-box domain maps to 9-59 (CRNLSELPQELLYKILGLLPTRNVVSTSLISHQRRSQFHWMERLKFRYPRL).

This is F-box protein At3g55900 from Arabidopsis thaliana (Mouse-ear cress).